We begin with the raw amino-acid sequence, 266 residues long: F-box only protein 50 (266 aa).

Over residues 1-16 (MEKTQDRDTLSGRMEA) the composition is skewed to basic and acidic residues. A disordered region spans residues 1-53 (MEKTQDRDTLSGRMEAEGSLNSEELPPHPQSPPPPPSPRSPTSPVTPELPQPN). Residues 27–41 (PHPQSPPPPPSPRSP) are compositionally biased toward pro residues. Phosphoserine occurs at positions 31, 37, 40, and 43. Residue threonine 46 is modified to Phosphothreonine. In terms of domain architecture, FBA spans 86 to 264 (LFLERPLYRN…VTDSSVSVQL (179 aa)).

Strongly expressed in kidney. Weakly expressed in stomach, colon, duodenum and prostate.

It localises to the cytoplasm. In terms of biological role, promotes cell proliferation. The protein is F-box only protein 50 (Nccrp1) of Mus musculus (Mouse).